The following is a 143-amino-acid chain: Sporulation-specific cell division protein SsgB (143 aa).

Belongs to the SsgA family. In terms of assembly, interacts with SsgA. Interacts with FtsZ (via N-terminus).

It is found in the cell septum. Its function is as follows. Involved in sporulation-specific cell division. Required for early stages of sporulation. Important in the process of growth cessation prior to sporulation-specific cell division. Recruits cell division protein FtsZ to the future septum sites and tethers the contractile ring structure (Z ring) to the cytoplasmic membrane during sporulation. Stimulates polymerization and filament length of FtsZ in vitro. This Salinispora tropica (strain ATCC BAA-916 / DSM 44818 / JCM 13857 / NBRC 105044 / CNB-440) protein is Sporulation-specific cell division protein SsgB.